The following is a 91-amino-acid chain: Defensin-like protein 95 (91 aa).

The first 27 residues, 1–27 (MGSLKLSTFAIVVCLSILLISPIEVNG), serve as a signal peptide directing secretion. Cystine bridges form between C31-C76, C38-C63, C47-C73, and C51-C75.

Belongs to the DEFL family.

It is found in the secreted. The chain is Defensin-like protein 95 from Arabidopsis thaliana (Mouse-ear cress).